Consider the following 328-residue polypeptide: B3 domain-containing protein At5g60140 (328 aa).

The segment at residues 13-109 (SKFFKPYLPS…FFNFSIFDHE (97 aa)) is a DNA-binding region (TF-B3). The disordered stretch occupies residues 145–221 (LNSDDSDDSD…EDEDDLEDED (77 aa)). Composition is skewed to acidic residues over residues 148 to 182 (DDSDDSDNDYSVEDDNVAEDDDGLEDEVDVEAEDG) and 190 to 221 (GLEDEDDDEAEDGYDAKDDDGLEDEDDLEDED).

The protein resides in the nucleus. The sequence is that of B3 domain-containing protein At5g60140 from Arabidopsis thaliana (Mouse-ear cress).